Here is a 313-residue protein sequence, read N- to C-terminus: Olfactory receptor 10P1 (313 aa).

Residues 1–25 (MAGENHTTLPEFLLLGFSDLKALQG) lie on the Extracellular side of the membrane. Asn-5 is a glycosylation site (N-linked (GlcNAc...) asparagine). Residues 26 to 46 (PLFWVVLLVYLVTLLGNSLII) form a helical membrane-spanning segment. Residues 47–54 (LLTQVSPA) are Cytoplasmic-facing. Residues 55-75 (LHSPMYFFLRQLSVVELFYTT) form a helical membrane-spanning segment. Residues 76–100 (DIVPRTLANLGSPHPQAISFQGCAA) lie on the Extracellular side of the membrane. The chain crosses the membrane as a helical span at residues 101–121 (QMYVFIVLGISECCLLTAMAY). The Cytoplasmic segment spans residues 122–140 (DRYVAICQPLRYSTLLSPR). Residues 141–161 (ACMAMVGTSWLTGIITATTHA) traverse the membrane as a helical segment. At 162 to 198 (SLIFSLPFRSHPIIPHFLCDILPVLRLASAGKHRSEI) the chain is on the extracellular side. Residues 199–218 (SVMTATIVFIMIPFSLIVTS) traverse the membrane as a helical segment. Over 219–238 (YIRILGAILAMASTQSRRKV) the chain is Cytoplasmic. A helical transmembrane segment spans residues 239-259 (FSTCSSHLLVVSLFFGTASIT). At 260–272 (YIRPQAGSSVTTD) the chain is on the extracellular side. A helical membrane pass occupies residues 273–293 (RVLSLFYTVITPMLNPIIYTL). The Cytoplasmic segment spans residues 294–313 (RNKDVRRALRHLVKRQRPSP).

The protein belongs to the G-protein coupled receptor 1 family.

Its subcellular location is the cell membrane. In terms of biological role, odorant receptor. The sequence is that of Olfactory receptor 10P1 (OR10P1) from Homo sapiens (Human).